Here is a 321-residue protein sequence, read N- to C-terminus: tRNA uridine(34) hydroxylase (321 aa).

The 99-residue stretch at 135–233 (DDPDTLVIDT…YLEQVPEEES (99 aa)) folds into the Rhodanese domain. The Cysteine persulfide intermediate role is filled by Cys-193. Positions 301 to 321 (RQRQMDQLSSASSKKSDDFSL) are disordered.

It belongs to the TrhO family.

The catalysed reaction is uridine(34) in tRNA + AH2 + O2 = 5-hydroxyuridine(34) in tRNA + A + H2O. In terms of biological role, catalyzes oxygen-dependent 5-hydroxyuridine (ho5U) modification at position 34 in tRNAs. This Parasynechococcus marenigrum (strain WH8102) protein is tRNA uridine(34) hydroxylase.